We begin with the raw amino-acid sequence, 248 residues long: Meiotically up-regulated gene 110 protein (248 aa).

A helical membrane pass occupies residues 23–43; the sequence is LRFVFWFSVLIPIFFIALIII.

Its subcellular location is the membrane. Functionally, has a role in meiosis. The sequence is that of Meiotically up-regulated gene 110 protein (mug110) from Schizosaccharomyces pombe (strain 972 / ATCC 24843) (Fission yeast).